The following is a 334-amino-acid chain: Tyrosine-protein kinase SRK3 (334 aa).

The region spanning 1–42 is the SH2 domain; that stretch reads IRTLDDGGFYMANRISFPTLQNLVSHYMMDADGLAQRLSRPC. The region spanning 66-321 is the Protein kinase domain; it reads IQLQRKLGQG…LKNLLEDYYV (256 aa). ATP is bound by residues 72–80 and Lys94; that span reads LGQGNFGEV. Asp186 serves as the catalytic Proton acceptor.

The protein belongs to the protein kinase superfamily. Tyr protein kinase family.

It localises to the cytoplasm. The catalysed reaction is L-tyrosyl-[protein] + ATP = O-phospho-L-tyrosyl-[protein] + ADP + H(+). This Spongilla lacustris (Freshwater sponge) protein is Tyrosine-protein kinase SRK3 (SRK3).